The chain runs to 470 residues: Myricetin 3-O-rhamnoside 1,2-glucosyltransferase UGT709G2 (470 aa).

The active-site Proton acceptor is His-20. Residue His-20 participates in an anthocyanidin binding. Catalysis depends on Asp-117, which acts as the Charge relay. The UDP-alpha-D-glucose site is built by Ala-340, Gln-342, His-357, Trp-360, Asn-361, Ser-362, and Glu-365. Ala-380 is a binding site for an anthocyanidin. The UDP-alpha-D-glucose site is built by Asp-381 and Gln-382.

It belongs to the UDP-glycosyltransferase family. In terms of tissue distribution, expressed in young cromes.

It carries out the reaction myricetin 3-O-alpha-L-rhamnoside + UDP-alpha-D-glucose = myricetin 3-O-[beta-D-glucosyl-(1-&gt;2)-alpha-L-rhamnoside] + UDP + H(+). It participates in flavonoid metabolism. In terms of biological role, glucosyltransferase involved in montbretin A (MbA) biosynthesis. Catalyzes the glucosylation of myricetin 3-O-alpha-L-rhamnoside (MR) to produce myricetin 3-O-[beta-D-glucosyl-(1-&gt;2)-alpha-L-rhamnoside] (MRG), a precursor of MbA. MbA is a potent inhibitor of human pancreatic alpha-amylase and is being developed as drug candidate to treat type-2 diabetes. In vitro, is able to transfer UDP-xylose with 50-fold less efficiency compared with UDP-glucose. In vitro, can use myricetin 3-O-glucoside and quercetin 3-O-glucoside as substrates, although these two flavonoids may not be physiological substrates in vivo. This is Myricetin 3-O-rhamnoside 1,2-glucosyltransferase UGT709G2 from Crocosmia x crocosmiiflora (Montbretia).